A 395-amino-acid polypeptide reads, in one-letter code: NAC domain-containing protein 7 (395 aa).

The 150-residue stretch at 7–156 folds into the NAC domain; it reads VPPGFRFHPT…GWVVCRVFKK (150 aa). Residues 107–162 mediate DNA binding; that stretch reads IGMRKTLVFYKGRAPNGQKSDWIMHEYRLETDENGTPQEEGWVVCRVFKKRLAAVR. Polar residues-rich tracts occupy residues 344-362 and 382-395; these read AATA…SNAE and TAST…DLWK. A disordered region spans residues 344–395; the sequence is AATASASIQNNAKDTSNAEYQVDEEKDPKRASDMGEEYTASTSSSCQIDLWK.

The protein belongs to the plant vascular related NAC-domain protein family. Interacts with NAC083/VNI2. As to expression, expressed in root, shoot and hypocotyl vascular elements, columella root caps, epidermal and cortex root cells and root-hypocotyl junctions. Observed predominantly in root imature xylem vessels. Present in root developing xylems. Specifically expressed in vessels in the secondary xylem of the root-hypocotyl region, and in vessels but not in interfascicular fibers in stems.

The protein localises to the nucleus. Its function is as follows. Transcription activator that binds to the secondary wall NAC binding element (SNBE), 5'-(T/A)NN(C/T)(T/C/G)TNNNNNNNA(A/C)GN(A/C/T)(A/T)-3', in the promoter of target genes. Involved in xylem formation by promoting the expression of secondary wall-associated transcription factors and of genes involved in secondary wall biosynthesis and programmed cell death, genes driven by the secondary wall NAC binding element (SNBE). Triggers thickening of secondary walls. In Arabidopsis thaliana (Mouse-ear cress), this protein is NAC domain-containing protein 7.